Consider the following 612-residue polypeptide: UvrABC system protein C (612 aa).

In terms of domain architecture, GIY-YIG spans 20–98; sequence THSGVYRMLD…IKQHRPKYNI (79 aa). Residues 208–243 form the UVR domain; sequence SSVLEEISANMYQASEDMEYEKAQVYRDQLVVLRKL.

The protein belongs to the UvrC family. Interacts with UvrB in an incision complex.

It localises to the cytoplasm. Functionally, the UvrABC repair system catalyzes the recognition and processing of DNA lesions. UvrC both incises the 5' and 3' sides of the lesion. The N-terminal half is responsible for the 3' incision and the C-terminal half is responsible for the 5' incision. The chain is UvrABC system protein C from Francisella tularensis subsp. holarctica (strain LVS).